The following is a 250-amino-acid chain: Agamous-like MADS-box protein AGL9 homolog (250 aa).

The MADS-box domain maps to 3 to 57 (RGRVELKMIENKINRQVTFAKRRKRLLKKAYELSVLCDAEVALIIFSNRGKLYEF). One can recognise a K-box domain in the interval 87–177 (TQSSQQEYLK…KRRFEESSQA (91 aa)).

Expressed in petals and weakly in sepals but not in the column (gynostemium).

It is found in the nucleus. Probable transcription factor active in inflorescence development and floral organogenesis. This Aranda deborah (Orchid) protein is Agamous-like MADS-box protein AGL9 homolog.